The chain runs to 322 residues: Ribosomal RNA small subunit methyltransferase H (322 aa).

Residues 40 to 42, Asp-60, Phe-84, Asp-106, and Gln-113 contribute to the S-adenosyl-L-methionine site; that span reads GGH.

The protein belongs to the methyltransferase superfamily. RsmH family.

The protein resides in the cytoplasm. It catalyses the reaction cytidine(1402) in 16S rRNA + S-adenosyl-L-methionine = N(4)-methylcytidine(1402) in 16S rRNA + S-adenosyl-L-homocysteine + H(+). In terms of biological role, specifically methylates the N4 position of cytidine in position 1402 (C1402) of 16S rRNA. The chain is Ribosomal RNA small subunit methyltransferase H from Mannheimia succiniciproducens (strain KCTC 0769BP / MBEL55E).